The chain runs to 55 residues: Large ribosomal subunit protein bL32 (55 aa).

The segment at 1 to 28 is disordered; the sequence is MAVQQNKPTRSKRGMRRSHDALTTATLS.

This sequence belongs to the bacterial ribosomal protein bL32 family.

This chain is Large ribosomal subunit protein bL32, found in Serratia proteamaculans (strain 568).